We begin with the raw amino-acid sequence, 311 residues long: GPN-loop GTPase 2 (311 aa).

20–25 (GSGKTT) serves as a coordination point for GTP. The Gly-Pro-Asn (GPN)-loop; involved in dimer interface signature appears at 77–79 (GPN). Residue 179 to 182 (SKMD) coordinates GTP.

Belongs to the GPN-loop GTPase family. As to quaternary structure, heterodimers with gpn1 or gpn3. Binds to RNA polymerase II (RNAPII).

Its function is as follows. Small GTPase required for proper localization of RNA polymerase II and III (RNAPII and RNAPIII). May act at an RNAP assembly step prior to nuclear import. The sequence is that of GPN-loop GTPase 2 from Danio rerio (Zebrafish).